Reading from the N-terminus, the 397-residue chain is Efflux pump periplasmic linker BepD (397 aa).

The first 26 residues, 1 to 26, serve as a signal peptide directing secretion; the sequence is MTLNRTIRCFAAGAAFIVFAAQPALA. The stretch at 98-139 forms a coiled coil; the sequence is APYQAELEKAQAQVAQAEAQYQQSIRDAERAEQLVQQKVQSA.

This sequence belongs to the membrane fusion protein (MFP) (TC 8.A.1) family. Probably part of a tripartite efflux pump, which is composed of an outer membrane efflux protein, an inner membrane protein and a protein that expands the periplasmic space. Could form a tripartite pump with BepC and BepE.

Its subcellular location is the periplasm. Involved in resistance to several unrelated toxic compounds, such as dyes, detergents and antibiotics. The protein is Efflux pump periplasmic linker BepD (bepD) of Brucella suis biovar 1 (strain 1330).